Here is a 1260-residue protein sequence, read N- to C-terminus: Agglutinin-like protein 1 (1260 aa).

A signal peptide spans 1–17 (MLQQFTLLFLYLSIASA). 4 cysteine pairs are disulfide-bonded: C73-C150, C96-C112, C205-C298, and C227-C256. ALS repeat units lie at residues 365–396 (TTIT…VDVP), 401–432 (TTVT…VQVP), and 438–469 (VSTT…IREP). N471 is a glycosylation site (N-linked (GlcNAc...) asparagine). Residues 474 to 505 (VTTTEYWSQSFATTTTVTAPPGETDTVIIREP) form an ALS 4 repeat. N-linked (GlcNAc...) asparagine glycosylation is present at N507. Residues 510 to 541 (VTTTEYWSQSYATTTTVTAPPGGTDTVLIREP) form an ALS 5 repeat. N543 carries N-linked (GlcNAc...) asparagine glycosylation. An ALS 6 repeat occupies 546-577 (VTTTEYWSQSYATTTTVTAPPGGTDTVIIREP). N579 is a glycosylation site (N-linked (GlcNAc...) asparagine). One copy of the ALS 7 repeat lies at 582 to 613 (VTTTEYWSQSYATTTTITAPPGETDTVIIREP). N615 is a glycosylation site (N-linked (GlcNAc...) asparagine). An ALS 8 repeat occupies 618 to 649 (VTTTEYWSQSYATTTTVTAPPGGTDTVLIREP). An N-linked (GlcNAc...) asparagine glycan is attached at N651. An ALS 9 repeat occupies 654–685 (VTTTEYWSQSYATTTTVTAPPGGTDTVLIREP). A glycan (N-linked (GlcNAc...) asparagine) is linked at N687. One copy of the ALS 10 repeat lies at 690-721 (VTTTEYWSQSYATTTTVTAPPGGTDTVIIREP). N-linked (GlcNAc...) asparagine glycosylation is present at N723. The stretch at 726–757 (VTTTEYWSQSYATTTTVTAPPGGTDTVIIREP) is one ALS 11 repeat. N759 carries an N-linked (GlcNAc...) asparagine glycan. Residues 762 to 791 (VTTTEYWSQSFATTTTVTAPPGGTDTVIIY) form an ALS 12 repeat. N-linked (GlcNAc...) asparagine glycans are attached at residues N820, N886, N918, and N973. 2 stretches are compositionally biased toward polar residues: residues 896–918 (PTAS…SSDN) and 964–979 (KVTF…GTHD). 2 disordered regions span residues 896–924 (PTAS…KSGV) and 954–1226 (SIPS…SSSP). Residues 980–995 (SQSTSTEIEIVTTSST) are compositionally biased toward low complexity. The segment covering 1002-1062 (VSSNTDLTSE…PTVATSTLAS (61 aa)) has biased composition (polar residues). 2 N-linked (GlcNAc...) asparagine glycosylation sites follow: N1045 and N1068. A compositionally biased stretch (polar residues) spans 1073-1090 (HESASTSLKPSMGENSGL). Residues 1091–1110 (TTSTEIEATTTSPTEAPSPA) show a composition bias toward low complexity. Over residues 1111–1154 (VSSGTDVTTEPTDTREQPTTLSTTSKTNSESVATTQATNENGGK) the composition is skewed to polar residues. Low complexity-rich tracts occupy residues 1155 to 1176 (SPST…SANS) and 1197 to 1226 (SHST…SSSP). The GPI-anchor amidated glycine moiety is linked to residue G1238. The propeptide at 1239 to 1260 (SGSIIQHSTWLYGLITLLSLFI) is removed in mature form.

It belongs to the ALS family. The GPI-anchor is attached to the protein in the endoplasmic reticulum and serves to target the protein to the cell surface. There, the glucosamine-inositol phospholipid moiety is cleaved off and the GPI-modified mannoprotein is covalently attached via its lipidless GPI glycan remnant to the 1,6-beta-glucan of the outer cell wall layer.

The protein localises to the cell membrane. Its subcellular location is the secreted. The protein resides in the cell wall. In terms of biological role, major cell surface adhesion protein which mediates both yeast-to-host tissue adherence and yeast aggregation. Acts as a downstream effector of the EFG1 regulatory pathway. Required for rapamycin-induced aggregation of C.albicans. Binds glycans and mediates adherence to endothelial and epithelial cells, thereby playing an important role in the pathogenesis of C.albicans infections. This Candida albicans (strain SC5314 / ATCC MYA-2876) (Yeast) protein is Agglutinin-like protein 1 (ALS1).